The following is a 494-amino-acid chain: Amidophosphoribosyltransferase (494 aa).

Positions 1–10 (MFNYSGLNEE) are excised as a propeptide. Catalysis depends on Cys11, which acts as the Nucleophile. The region spanning 11 to 231 (CGVFGIWNHP…AGEYVVINDK (221 aa)) is the Glutamine amidotransferase type-2 domain. Ser294, Asp356, and Asp357 together coordinate Mg(2+).

This sequence in the C-terminal section; belongs to the purine/pyrimidine phosphoribosyltransferase family. It depends on Mg(2+) as a cofactor.

The catalysed reaction is 5-phospho-beta-D-ribosylamine + L-glutamate + diphosphate = 5-phospho-alpha-D-ribose 1-diphosphate + L-glutamine + H2O. It participates in purine metabolism; IMP biosynthesis via de novo pathway; N(1)-(5-phospho-D-ribosyl)glycinamide from 5-phospho-alpha-D-ribose 1-diphosphate: step 1/2. In terms of biological role, catalyzes the formation of phosphoribosylamine from phosphoribosylpyrophosphate (PRPP) and glutamine. This Staphylococcus aureus (strain Mu50 / ATCC 700699) protein is Amidophosphoribosyltransferase.